A 209-amino-acid chain; its full sequence is Protocatechuate 3,4-dioxygenase alpha chain (209 aa).

Arg142 contacts 3,4-dihydroxybenzoate.

The protein belongs to the intradiol ring-cleavage dioxygenase family. As to quaternary structure, the enzyme is an oligomer of 12 copies of the alpha and beta chains. It depends on Fe(3+) as a cofactor.

The enzyme catalyses 3,4-dihydroxybenzoate + O2 = 3-carboxy-cis,cis-muconate + 2 H(+). Its pathway is aromatic compound metabolism; beta-ketoadipate pathway; 3-carboxy-cis,cis-muconate from 3,4-dihydroxybenzoate: step 1/1. Functionally, plays an essential role in the utilization of numerous aromatic and hydroaromatic compounds via the beta-ketoadipate pathway. The polypeptide is Protocatechuate 3,4-dioxygenase alpha chain (pcaG) (Acinetobacter baylyi (strain ATCC 33305 / BD413 / ADP1)).